The primary structure comprises 291 residues: Pantothenate synthetase (291 aa).

Residue 30-37 (MGYLHAGH) coordinates ATP. The active-site Proton donor is His-37. A (R)-pantoate-binding site is contributed by Gln-61. Beta-alanine is bound at residue Gln-61. 147–150 (GEKD) contacts ATP. (R)-pantoate is bound at residue Gln-153. ATP-binding positions include Val-176 and 184 to 187 (LSSR).

Belongs to the pantothenate synthetase family. As to quaternary structure, homodimer.

Its subcellular location is the cytoplasm. It catalyses the reaction (R)-pantoate + beta-alanine + ATP = (R)-pantothenate + AMP + diphosphate + H(+). It functions in the pathway cofactor biosynthesis; (R)-pantothenate biosynthesis; (R)-pantothenate from (R)-pantoate and beta-alanine: step 1/1. Functionally, catalyzes the condensation of pantoate with beta-alanine in an ATP-dependent reaction via a pantoyl-adenylate intermediate. This chain is Pantothenate synthetase, found in Rhizobium rhizogenes (strain K84 / ATCC BAA-868) (Agrobacterium radiobacter).